The following is a 124-amino-acid chain: 14 kDa peptide of ubiquinol-cytochrome c2 oxidoreductase complex (124 aa).

Residues 85 to 102 (LGGFASGALLALALAGIF) form a helical membrane-spanning segment.

The protein localises to the cell inner membrane. In terms of biological role, component of the ubiquinol-cytochrome c reductase complex (complex III or cytochrome b-c1 complex), which is a respiratory chain that generates an electrochemical potential coupled to ATP synthesis. This is 14 kDa peptide of ubiquinol-cytochrome c2 oxidoreductase complex from Cereibacter sphaeroides (Rhodobacter sphaeroides).